The following is an 822-amino-acid chain: Molybdenum cofactor sulfurase (822 aa).

Lys239 is subject to N6-(pyridoxal phosphate)lysine. Cys401 is a catalytic residue. The interval Thr633–Pro666 is disordered. Positions Arg643 to Gln820 constitute an MOSC domain.

This sequence belongs to the class-V pyridoxal-phosphate-dependent aminotransferase family. MOCOS subfamily. Pyridoxal 5'-phosphate serves as cofactor.

It carries out the reaction Mo-molybdopterin + L-cysteine + AH2 = thio-Mo-molybdopterin + L-alanine + A + H2O. It functions in the pathway cofactor biosynthesis; molybdopterin biosynthesis. Functionally, sulfurates the molybdenum cofactor. Sulfation of molybdenum is essential for xanthine dehydrogenase (XDH) and aldehyde oxidase (ADO) enzymes in which molybdenum cofactor is liganded by 1 oxygen and 1 sulfur atom in active form. This is Molybdenum cofactor sulfurase from Aspergillus oryzae (strain ATCC 42149 / RIB 40) (Yellow koji mold).